The sequence spans 534 residues: Inosine-5'-monophosphate dehydrogenase (534 aa).

2 consecutive CBS domains span residues 117–181 and 190–255; these read YVMQ…GTPI and TTPI…PMAS. NAD(+) is bound by residues 292–294 and 342–344; these read DSS and GMG. The K(+) site is built by Gly344 and Gly346. Ser347 contributes to the IMP binding site. Cys349 is a binding site for K(+). Cys349 (thioimidate intermediate) is an active-site residue. Residues 382-384, 405-406, and 430-434 contribute to the IMP site; these read DGG, GG, and YRGMG. Arg448 (proton acceptor) is an active-site residue. Residue Gln461 coordinates IMP. K(+) contacts are provided by Glu520, Gly521, and Gly522.

It belongs to the IMPDH/GMPR family. Homotetramer. Requires K(+) as cofactor.

It is found in the cytoplasm. It catalyses the reaction IMP + NAD(+) + H2O = XMP + NADH + H(+). It participates in purine metabolism; XMP biosynthesis via de novo pathway; XMP from IMP: step 1/1. Mycophenolic acid (MPA) is a non-competitive inhibitor that prevents formation of the closed enzyme conformation by binding to the same site as the amobile flap. In contrast, mizoribine monophosphate (MZP) is a competitive inhibitor that induces the closed conformation. MPA is a potent inhibitor of mammalian IMPDHs but a poor inhibitor of the bacterial enzymes. MZP is a more potent inhibitor of bacterial IMPDH. Its function is as follows. Catalyzes the conversion of inosine 5'-phosphate (IMP) to xanthosine 5'-phosphate (XMP), the first committed and rate-limiting step in the de novo synthesis of guanine nucleotides, and therefore plays an important role in the regulation of cell growth. In Caenorhabditis elegans, this protein is Inosine-5'-monophosphate dehydrogenase.